Reading from the N-terminus, the 331-residue chain is Thiamine thiazole synthase (331 aa).

Residues Cys-86, 107 to 108 (EA), Gly-115, and Val-183 contribute to the substrate site. Position 220 is a 2,3-didehydroalanine (Cys) (Cys-220). Residues Asp-222, His-237, Met-289, and 299-301 (RMG) contribute to the substrate site.

This sequence belongs to the THI4 family. As to quaternary structure, homooctamer. Fe cation serves as cofactor. During the catalytic reaction, a sulfide is transferred from Cys-220 to a reaction intermediate, generating a dehydroalanine residue.

It localises to the cytoplasm. The protein resides in the nucleus. The enzyme catalyses [ADP-thiazole synthase]-L-cysteine + glycine + NAD(+) = [ADP-thiazole synthase]-dehydroalanine + ADP-5-ethyl-4-methylthiazole-2-carboxylate + nicotinamide + 3 H2O + 2 H(+). In terms of biological role, involved in biosynthesis of the thiamine precursor thiazole. Catalyzes the conversion of NAD and glycine to adenosine diphosphate 5-(2-hydroxyethyl)-4-methylthiazole-2-carboxylic acid (ADT), an adenylated thiazole intermediate. The reaction includes an iron-dependent sulfide transfer from a conserved cysteine residue of the protein to a thiazole intermediate. The enzyme can only undergo a single turnover, which suggests it is a suicide enzyme. May have additional roles in adaptation to various stress conditions and in DNA damage tolerance. The sequence is that of Thiamine thiazole synthase from Emericella nidulans (strain FGSC A4 / ATCC 38163 / CBS 112.46 / NRRL 194 / M139) (Aspergillus nidulans).